A 368-amino-acid polypeptide reads, in one-letter code: Germination protease (368 aa).

Residues 1-16 (MEKKKLDLSQYAVRTD) constitute a propeptide that is removed on maturation.

It belongs to the peptidase A25 family. In terms of assembly, homotetramer. Post-translationally, autoproteolytically processed. The inactive tetrameric zymogen termed p46 autoprocesses to a smaller form termed p41, which is active only during spore germination.

The catalysed reaction is Endopeptidase action with P4 Glu or Asp, P1 preferably Glu &gt; Asp, P1' hydrophobic and P2' Ala.. Its function is as follows. Initiates the rapid degradation of small, acid-soluble proteins during spore germination. The protein is Germination protease of Bacillus licheniformis (strain ATCC 14580 / DSM 13 / JCM 2505 / CCUG 7422 / NBRC 12200 / NCIMB 9375 / NCTC 10341 / NRRL NRS-1264 / Gibson 46).